The primary structure comprises 637 residues: tRNA 5-methylaminomethyl-2-thiouridine biosynthesis bifunctional protein MnmC (637 aa).

The tract at residues 1-231 (MPIDPARLAF…KRQMCRGRHR (231 aa)) is tRNA (mnm(5)s(2)U34)-methyltransferase. The FAD-dependent cmnm(5)s(2)U34 oxidoreductase stretch occupies residues 250–637 (IGAGLAGSST…RPARGMTREG (388 aa)).

The protein in the N-terminal section; belongs to the methyltransferase superfamily. tRNA (mnm(5)s(2)U34)-methyltransferase family. In the C-terminal section; belongs to the DAO family. FAD is required as a cofactor.

The protein resides in the cytoplasm. It catalyses the reaction 5-aminomethyl-2-thiouridine(34) in tRNA + S-adenosyl-L-methionine = 5-methylaminomethyl-2-thiouridine(34) in tRNA + S-adenosyl-L-homocysteine + H(+). Its function is as follows. Catalyzes the last two steps in the biosynthesis of 5-methylaminomethyl-2-thiouridine (mnm(5)s(2)U) at the wobble position (U34) in tRNA. Catalyzes the FAD-dependent demodification of cmnm(5)s(2)U34 to nm(5)s(2)U34, followed by the transfer of a methyl group from S-adenosyl-L-methionine to nm(5)s(2)U34, to form mnm(5)s(2)U34. This is tRNA 5-methylaminomethyl-2-thiouridine biosynthesis bifunctional protein MnmC from Aromatoleum aromaticum (strain DSM 19018 / LMG 30748 / EbN1) (Azoarcus sp. (strain EbN1)).